Consider the following 385-residue polypeptide: tRNA-specific 2-thiouridylase MnmA (385 aa).

ATP contacts are provided by residues 27–34 and Leu53; that span reads AMSGGVDS. The active-site Nucleophile is Cys121. Cys121 and Cys217 are joined by a disulfide. Gly145 is an ATP binding site. The segment at 167–169 is interaction with tRNA; it reads KDQ. The active-site Cysteine persulfide intermediate is Cys217.

This sequence belongs to the MnmA/TRMU family.

Its subcellular location is the cytoplasm. It carries out the reaction S-sulfanyl-L-cysteinyl-[protein] + uridine(34) in tRNA + AH2 + ATP = 2-thiouridine(34) in tRNA + L-cysteinyl-[protein] + A + AMP + diphosphate + H(+). Its function is as follows. Catalyzes the 2-thiolation of uridine at the wobble position (U34) of tRNA, leading to the formation of s(2)U34. The protein is tRNA-specific 2-thiouridylase MnmA of Sorangium cellulosum (strain So ce56) (Polyangium cellulosum (strain So ce56)).